The sequence spans 392 residues: UPF0229 protein CPF_1540 (392 aa).

The interval 75–100 (VTTGTGEERRGDRISSDKRKAISNNK) is disordered. Residues 80-94 (GEERRGDRISSDKRK) are compositionally biased toward basic and acidic residues.

This sequence belongs to the UPF0229 family.

This Clostridium perfringens (strain ATCC 13124 / DSM 756 / JCM 1290 / NCIMB 6125 / NCTC 8237 / Type A) protein is UPF0229 protein CPF_1540.